The chain runs to 456 residues: 3-isopropylmalate dehydratase large subunit (456 aa).

Residues Cys336, Cys396, and Cys399 each coordinate [4Fe-4S] cluster.

It belongs to the aconitase/IPM isomerase family. LeuC type 1 subfamily. As to quaternary structure, heterodimer of LeuC and LeuD. The cofactor is [4Fe-4S] cluster.

The enzyme catalyses (2R,3S)-3-isopropylmalate = (2S)-2-isopropylmalate. The protein operates within amino-acid biosynthesis; L-leucine biosynthesis; L-leucine from 3-methyl-2-oxobutanoate: step 2/4. Its function is as follows. Catalyzes the isomerization between 2-isopropylmalate and 3-isopropylmalate, via the formation of 2-isopropylmaleate. This Staphylococcus aureus (strain MW2) protein is 3-isopropylmalate dehydratase large subunit.